Reading from the N-terminus, the 949-residue chain is Translation initiation factor IF-2 (949 aa).

Disordered regions lie at residues 54–183 (FLKP…EAAP), 217–288 (LPAA…EVAL), and 305–357 (EVVA…EMQA). Composition is skewed to basic and acidic residues over residues 67–92 (DQEKPEEIEEKKEAPKSPKRGEERHI) and 101–164 (IEAK…EEAA). Composition is skewed to low complexity over residues 165–183 (RAAAAAPAAPVAAPAEAAP) and 217–228 (LPAAAPAAPSAP). 2 stretches are compositionally biased toward basic and acidic residues: residues 235–288 (PVEE…EVAL) and 330–339 (KYQDNEDRLQ). Positions 445-619 (TRPPVITVMG…EMLNLQSNPT (175 aa)) constitute a tr-type G domain. Residues 454–461 (GHVDHGKT) form a G1 region. Residue 454–461 (GHVDHGKT) participates in GTP binding. A G2 region spans residues 479 to 483 (GITQH). A G3 region spans residues 501–504 (DTPG). GTP-binding positions include 501-505 (DTPGH) and 555-558 (NKID). The segment at 555 to 558 (NKID) is G4. The tract at residues 591-593 (SAK) is G5.

It belongs to the TRAFAC class translation factor GTPase superfamily. Classic translation factor GTPase family. IF-2 subfamily.

Its subcellular location is the cytoplasm. One of the essential components for the initiation of protein synthesis. Protects formylmethionyl-tRNA from spontaneous hydrolysis and promotes its binding to the 30S ribosomal subunits. Also involved in the hydrolysis of GTP during the formation of the 70S ribosomal complex. The chain is Translation initiation factor IF-2 from Magnetococcus marinus (strain ATCC BAA-1437 / JCM 17883 / MC-1).